Reading from the N-terminus, the 147-residue chain is Lipoprotein YfjS (147 aa).

A signal peptide spans 1–20 (MKRKTLPLLALVATSLFLSA). Cysteine 21 carries N-palmitoyl cysteine lipidation. The S-diacylglycerol cysteine moiety is linked to residue cysteine 21.

To E.coli YafY.

Its subcellular location is the cell inner membrane. Does not induce degP when overexpressed unless it is mutated to resemble YafY. In Escherichia coli (strain K12), this protein is Lipoprotein YfjS (yfjS).